The chain runs to 410 residues: MAPNALSPVDIENMNDAAIEQVRLQVSDVIDPRYDTKWNMLRWLQSNDFNIPKTVHLLKKHLKWRKDRKLDEPESQSLLQFSDARRKHAPIDIIGPQRKEDGDRLVVVDRAGRIDVSGLMKSVQPTEYLHEMFRSFEEIQRRLMKMEAETGVQCYMHYIFDLEALNFDPTLLGVVNGPFRVSWQLVGQHYREFIDKFIVINSPSYINVLWSALSPFIPEQSKQRIVFAGSNWKEELLDIVDKECLPERYGGMIPDIQCLKPVDPIPKSLYWKLPAQYPTMDQLHKVSVSASKHRMLIYKVDKPDTELLMYSHNENDITITLYYSKNKNVSENDLELAVAPIPKCGLPAMDLFDYNCEYPGYYYIKLANEASWLLPSTYRIIVIEKESGKELEPLNLNEKWIKKGQKSKKK.

The region spanning 81 to 257 (FSDARRKHAP…RYGGMIPDIQ (177 aa)) is the CRAL-TRIO domain.

The protein is CRAL-TRIO domain-containing protein F28H7.8 of Caenorhabditis elegans.